Consider the following 310-residue polypeptide: ADP-L-glycero-D-manno-heptose-6-epimerase (310 aa).

NADP(+) is bound by residues 10–11 (FI), 31–32 (DN), lysine 38, lysine 53, 75–79 (EGACS), and asparagine 92. Tyrosine 140 functions as the Proton acceptor in the catalytic mechanism. Lysine 144 is a binding site for NADP(+). Asparagine 169 is a binding site for substrate. Residues valine 170 and lysine 178 each contribute to the NADP(+) site. Lysine 178 (proton acceptor) is an active-site residue. Residues glycine 180, histidine 187, 201-204 (FAGS), arginine 209, and tyrosine 272 contribute to the substrate site.

It belongs to the NAD(P)-dependent epimerase/dehydratase family. HldD subfamily. In terms of assembly, homopentamer. Requires NADP(+) as cofactor.

It carries out the reaction ADP-D-glycero-beta-D-manno-heptose = ADP-L-glycero-beta-D-manno-heptose. Its pathway is nucleotide-sugar biosynthesis; ADP-L-glycero-beta-D-manno-heptose biosynthesis; ADP-L-glycero-beta-D-manno-heptose from D-glycero-beta-D-manno-heptose 7-phosphate: step 4/4. Functionally, catalyzes the interconversion between ADP-D-glycero-beta-D-manno-heptose and ADP-L-glycero-beta-D-manno-heptose via an epimerization at carbon 6 of the heptose. This is ADP-L-glycero-D-manno-heptose-6-epimerase from Sodalis glossinidius (strain morsitans).